Consider the following 242-residue polypeptide: DNA repair protein RecO (242 aa).

This sequence belongs to the RecO family. In terms of assembly, monomer.

In terms of biological role, involved in DNA repair and RecF pathway recombination. The sequence is that of DNA repair protein RecO from Salmonella dublin (strain CT_02021853).